The primary structure comprises 432 residues: Probable exopolygalacturonase C (432 aa).

The N-terminal stretch at 1–20 is a signal peptide; sequence MPISKGIFLSLLSTLPLALA. Residues N33, N73, N90, and N140 are each glycosylated (N-linked (GlcNAc...) asparagine). 2 PbH1 repeats span residues 206–227 and 229–250; these read GTNIRISDSVMYNGDDAIAVGS and SHDIVFERNTIGYQSHGMSIGS. Residue D220 is the Proton donor of the active site. H244 is an active-site residue. The N-linked (GlcNAc...) asparagine glycan is linked to N260. A PbH1 3 repeat occupies 261-282; the sequence is ITNLRFEDVTVIDALYAARFKS. 2 N-linked (GlcNAc...) asparagine glycosylation sites follow: N292 and N302. C377 and C383 are disulfide-bonded. N407 is a glycosylation site (N-linked (GlcNAc...) asparagine).

It belongs to the glycosyl hydrolase 28 family.

The protein localises to the secreted. The catalysed reaction is [(1-&gt;4)-alpha-D-galacturonosyl](n) + H2O = alpha-D-galacturonate + [(1-&gt;4)-alpha-D-galacturonosyl](n-1). Its function is as follows. Specific in hydrolyzing the terminal glycosidic bond of polygalacturonic acid and oligogalacturonates. This chain is Probable exopolygalacturonase C (pgxC), found in Aspergillus terreus (strain NIH 2624 / FGSC A1156).